Consider the following 213-residue polypeptide: Pyridoxine/pyridoxamine 5'-phosphate oxidase 2 (213 aa).

Residues 9 to 12 (RQRY) and K67 each bind substrate. FMN contacts are provided by residues 62–67 (RTVLLK), 77–78 (FT), K84, and Q106. Residues Y124, R128, and S132 each contribute to the substrate site. Residues 141–142 (QS) and W186 contribute to the FMN site. 192-194 (RLH) lines the substrate pocket. R196 contacts FMN.

Belongs to the pyridoxamine 5'-phosphate oxidase family. As to quaternary structure, homodimer. FMN serves as cofactor.

The catalysed reaction is pyridoxamine 5'-phosphate + O2 + H2O = pyridoxal 5'-phosphate + H2O2 + NH4(+). It catalyses the reaction pyridoxine 5'-phosphate + O2 = pyridoxal 5'-phosphate + H2O2. It participates in cofactor metabolism; pyridoxal 5'-phosphate salvage; pyridoxal 5'-phosphate from pyridoxamine 5'-phosphate: step 1/1. The protein operates within cofactor metabolism; pyridoxal 5'-phosphate salvage; pyridoxal 5'-phosphate from pyridoxine 5'-phosphate: step 1/1. Its function is as follows. Catalyzes the oxidation of either pyridoxine 5'-phosphate (PNP) or pyridoxamine 5'-phosphate (PMP) into pyridoxal 5'-phosphate (PLP). The protein is Pyridoxine/pyridoxamine 5'-phosphate oxidase 2 of Hydrogenovibrio crunogenus (strain DSM 25203 / XCL-2) (Thiomicrospira crunogena).